Here is a 360-residue protein sequence, read N- to C-terminus: BOLA class I histocompatibility antigen, alpha chain BL3-6 (360 aa).

Positions 1-21 are cleaved as a signal peptide; the sequence is MGPRALLLLLSGVLILTETRA. The segment at 22–111 is alpha-1; that stretch reads GSHSLRYFST…LRGYYNQSEA (90 aa). Residues 22 to 308 are Extracellular-facing; the sequence is GSHSLRYFST…QPSFLTMGII (287 aa). N-linked (GlcNAc...) asparagine glycosylation occurs at N107. Residues 112–203 form an alpha-2 region; that stretch reads GSHTLQWMSG…ENGKDTLLRA (92 aa). 2 cysteine pairs are disulfide-bonded: C122–C185 and C224–C280. Residues 204 to 295 form an alpha-3 region; that stretch reads DPPKAHVTHH…GLQEPLTLRW (92 aa). The Ig-like C1-type domain maps to 206 to 292; that stretch reads PKAHVTHHPI…QHEGLQEPLT (87 aa). Residues 296–308 are connecting peptide; it reads EPPQPSFLTMGII. A helical membrane pass occupies residues 309 to 328; the sequence is VGLVLLVVTGAVVAGVVICM. The Cytoplasmic segment spans residues 329 to 360; it reads KKRSGEKGGNYIQASSSDSAQGSDVSLTVPKV. The interval 340-360 is disordered; the sequence is IQASSSDSAQGSDVSLTVPKV. Residues 341-354 are compositionally biased toward low complexity; that stretch reads QASSSDSAQGSDVS. 2 positions are modified to phosphoserine: S351 and S354.

This sequence belongs to the MHC class I family. In terms of assembly, heterodimer of an alpha chain and a beta chain (beta-2-microglobulin).

The protein localises to the membrane. In terms of biological role, involved in the presentation of foreign antigens to the immune system. This Bos taurus (Bovine) protein is BOLA class I histocompatibility antigen, alpha chain BL3-6.